Reading from the N-terminus, the 387-residue chain is Pepsin A (387 aa).

The first 15 residues, 1 to 15 (MKWLLLLSLVALSEC), serve as a signal peptide directing secretion. Residues 16–61 (LYKVSLIKKKSLRKNLIEHGLLKDFLKNNTLDPASKYFPQGEAATM) constitute a propeptide, activation peptide. A Peptidase A1 domain is found at 75–384 (YFGTIGIGTP…DRANNQVGLA (310 aa)). Residue aspartate 93 is part of the active site. A disulfide bridge links cysteine 106 with cysteine 111. A Phosphoserine modification is found at serine 129. Cysteine 267 and cysteine 271 are oxidised to a cystine. Aspartate 276 is an active-site residue. An intrachain disulfide couples cysteine 310 to cysteine 343.

This sequence belongs to the peptidase A1 family.

The protein resides in the secreted. The catalysed reaction is Preferential cleavage: hydrophobic, preferably aromatic, residues in P1 and P1' positions. Cleaves 1-Phe-|-Val-2, 4-Gln-|-His-5, 13-Glu-|-Ala-14, 14-Ala-|-Leu-15, 15-Leu-|-Tyr-16, 16-Tyr-|-Leu-17, 23-Gly-|-Phe-24, 24-Phe-|-Phe-25 and 25-Phe-|-Tyr-26 bonds in the B chain of insulin.. Its activity is regulated as follows. Inhibited by pepstatin. Its function is as follows. Shows particularly broad specificity; although bonds involving phenylalanine and leucine are preferred, many others are also cleaved to some extent. The polypeptide is Pepsin A (PGA) (Callithrix jacchus (White-tufted-ear marmoset)).